The chain runs to 199 residues: MTNVYFLDIFMFVYVLQFLFYFKESMLGVLVNKFLGLLVVVFSYTDSLPLSSVISVFTFLVLLTCCFGGYFMYSFCPCGMIEFTFVYAMVAWLSTLLTFITSEKFSIYISKAGDSFLKTFSMLLVELVSEVSRPLALTVRLTVNVLVGHVISMMLYQLLELYLGIFYVWIVVLAIVMECFVFFIQSYIFSRLIYLYLNE.

6 consecutive transmembrane segments (helical) span residues 2 to 22, 25 to 45, 53 to 73, 80 to 100, 143 to 163, and 164 to 184; these read TNVY…LFYF, SMLG…FSYT, VISV…YFMY, MIEF…LTFI, VNVL…ELYL, and GIFY…VFFI.

This sequence belongs to the ATPase A chain family. F-type ATPases have 2 components, CF(1) - the catalytic core - and CF(0) - the membrane proton channel. CF(1) has five subunits: alpha(3), beta(3), gamma(1), delta(1), epsilon(1). CF(0) has three main subunits: a, b and c.

Its subcellular location is the mitochondrion inner membrane. Its function is as follows. Mitochondrial membrane ATP synthase (F(1)F(0) ATP synthase or Complex V) produces ATP from ADP in the presence of a proton gradient across the membrane which is generated by electron transport complexes of the respiratory chain. F-type ATPases consist of two structural domains, F(1) - containing the extramembraneous catalytic core and F(0) - containing the membrane proton channel, linked together by a central stalk and a peripheral stalk. During catalysis, ATP synthesis in the catalytic domain of F(1) is coupled via a rotary mechanism of the central stalk subunits to proton translocation. Key component of the proton channel; it may play a direct role in the translocation of protons across the membrane. This Ascaris suum (Pig roundworm) protein is ATP synthase subunit a (ATP6).